The chain runs to 510 residues: NAD(P)H-quinone oxidoreductase subunit 2, chloroplastic (510 aa).

The next 12 helical transmembrane spans lie at 24–44 (LLLFHGSFIFPECILIFGLIL), 59–79 (WFYFISSTSLVISITALLFRW), 99–119 (IFQFLILLCSTLCIPLSVEYI), 124–144 (MAITEFLLFVLTATLGGMFLC), 149–169 (LITIFVAPECFSLCSYLLSGY), 183–203 (YLLMGGASSSILVHGFSWLYG), 229–249 (ISIALIFITVGIGFKLSPAPF), 295–315 (WHLLLEILAILSMILGNLIAI), 323–343 (MLAYSSIGQIGYVIIGIIVGD), 354–374 (YMLFYISMNLGTFACIVLFGL), 395–415 (ALSSALCLLSLGGLPPLAGFF), and 418–438 (LYLFWCGWQAGLYFLVSIGLL).

This sequence belongs to the complex I subunit 2 family. In terms of assembly, NDH is composed of at least 16 different subunits, 5 of which are encoded in the nucleus.

The protein localises to the plastid. It localises to the chloroplast thylakoid membrane. It carries out the reaction a plastoquinone + NADH + (n+1) H(+)(in) = a plastoquinol + NAD(+) + n H(+)(out). The catalysed reaction is a plastoquinone + NADPH + (n+1) H(+)(in) = a plastoquinol + NADP(+) + n H(+)(out). NDH shuttles electrons from NAD(P)H:plastoquinone, via FMN and iron-sulfur (Fe-S) centers, to quinones in the photosynthetic chain and possibly in a chloroplast respiratory chain. The immediate electron acceptor for the enzyme in this species is believed to be plastoquinone. Couples the redox reaction to proton translocation, and thus conserves the redox energy in a proton gradient. The sequence is that of NAD(P)H-quinone oxidoreductase subunit 2, chloroplastic from Ananas comosus (Pineapple).